Here is a 692-residue protein sequence, read N- to C-terminus: Polyphosphate kinase (692 aa).

Asn-57 is a binding site for ATP. 2 residues coordinate Mg(2+): Arg-383 and Arg-413. His-443 (phosphohistidine intermediate) is an active-site residue. ATP contacts are provided by Tyr-476, Arg-572, and His-600.

Belongs to the polyphosphate kinase 1 (PPK1) family. It depends on Mg(2+) as a cofactor. Post-translationally, an intermediate of this reaction is the autophosphorylated ppk in which a phosphate is covalently linked to a histidine residue through a N-P bond.

It catalyses the reaction [phosphate](n) + ATP = [phosphate](n+1) + ADP. Its function is as follows. Catalyzes the reversible transfer of the terminal phosphate of ATP to form a long-chain polyphosphate (polyP). The polypeptide is Polyphosphate kinase (Acinetobacter baumannii (strain AYE)).